The chain runs to 299 residues: Bifunctional protein FolD (299 aa).

NADP(+)-binding positions include 168–170 (GRS), serine 193, and isoleucine 234.

It belongs to the tetrahydrofolate dehydrogenase/cyclohydrolase family. As to quaternary structure, homodimer.

It carries out the reaction (6R)-5,10-methylene-5,6,7,8-tetrahydrofolate + NADP(+) = (6R)-5,10-methenyltetrahydrofolate + NADPH. The enzyme catalyses (6R)-5,10-methenyltetrahydrofolate + H2O = (6R)-10-formyltetrahydrofolate + H(+). It participates in one-carbon metabolism; tetrahydrofolate interconversion. Functionally, catalyzes the oxidation of 5,10-methylenetetrahydrofolate to 5,10-methenyltetrahydrofolate and then the hydrolysis of 5,10-methenyltetrahydrofolate to 10-formyltetrahydrofolate. The polypeptide is Bifunctional protein FolD (Bartonella quintana (strain Toulouse) (Rochalimaea quintana)).